Here is a 209-residue protein sequence, read N- to C-terminus: ATP-dependent Clp protease proteolytic subunit (209 aa).

The Nucleophile role is filled by serine 107. Histidine 132 is a catalytic residue.

Belongs to the peptidase S14 family. In terms of assembly, fourteen ClpP subunits assemble into 2 heptameric rings which stack back to back to give a disk-like structure with a central cavity, resembling the structure of eukaryotic proteasomes.

It is found in the cytoplasm. It catalyses the reaction Hydrolysis of proteins to small peptides in the presence of ATP and magnesium. alpha-casein is the usual test substrate. In the absence of ATP, only oligopeptides shorter than five residues are hydrolyzed (such as succinyl-Leu-Tyr-|-NHMec, and Leu-Tyr-Leu-|-Tyr-Trp, in which cleavage of the -Tyr-|-Leu- and -Tyr-|-Trp bonds also occurs).. In terms of biological role, cleaves peptides in various proteins in a process that requires ATP hydrolysis. Has a chymotrypsin-like activity. Plays a major role in the degradation of misfolded proteins. The protein is ATP-dependent Clp protease proteolytic subunit of Ruegeria pomeroyi (strain ATCC 700808 / DSM 15171 / DSS-3) (Silicibacter pomeroyi).